The chain runs to 551 residues: Protein MTL1 (551 aa).

The first 35 residues, 1-35 (MASCNPTRKKSSASSLSMWRTILMALTTLPLSVLS), serve as a signal peptide directing secretion. Residues 36-361 (QELVPANSTT…HSGLSKKNRN (326 aa)) are Extracellular-facing. Disordered stretches follow at residues 108 to 143 (MQVS…IISS), 206 to 227 (PSSS…SYSS), and 243 to 263 (SSSS…SSSS). A helical membrane pass occupies residues 362-382 (IIIGCVVGIGAPLILILLILI). At 383–551 (YMFCVQPKKT…PNNGLNITNY (169 aa)) the chain is on the cytoplasmic side. A disordered region spans residues 429–513 (SSDSPIGSNN…SNSNSQDYND (85 aa)). Positions 430 to 441 (SDSPIGSNNIQN) are enriched in polar residues. The segment covering 466–477 (GYDDDDDDDAND) has biased composition (acidic residues). Serine 481 and serine 482 each carry phosphoserine. Residues 498–508 (SASYSMSNSNS) are compositionally biased toward low complexity.

Belongs to the MID2 like cell wall stress sensor family.

It localises to the membrane. In terms of biological role, involved in cell integrity signaling during vegetative growth at elevated temperature. Acts positively on the PKC1-MAPK pathway. Cell membrane sensor of oxidative stress in the cell integrity pathway upstream of PKC1. Required to transmit the oxidative signal to SLT2 and to restore the correct actin organization following oxidative stress. Multicopy suppressor of 1,3-beta-glucan synthase (GS) mutation. Also suppresses RGD1 null mutations. This is Protein MTL1 (MTL1) from Saccharomyces cerevisiae (strain ATCC 204508 / S288c) (Baker's yeast).